A 450-amino-acid chain; its full sequence is Probable ECA polymerase (450 aa).

Transmembrane regions (helical) follow at residues 6-26, 37-57, 63-83, 118-138, 155-175, 181-201, 207-227, 228-248, 341-361, 378-398, and 410-430; these read FSGLFVVWLLCTLFIATLTWF, VFFSLLFLLTFFFGFPLTSVL, VGVAPPEILLQALLSAGCFYA, VILMGIALVSVGIFFMHNGFL, GVALKRFFYFFIPAMLVVYFL, AWLFFLVSTVAFGLLTYMIVG, IIIAFAIFLFIGIIRGWISLW, MLAAAGVLGIVGMFWLALKRY, LVVMGGALFIPLGAIVVGLII, YKAAILHSFCFGAIFNMIVLA, and VFFIVVFGACLMIAKLLYWLF.

It belongs to the WzyE family. In terms of assembly, probably part of a complex composed of WzxE, WzyE and WzzE.

Its subcellular location is the cell inner membrane. It functions in the pathway bacterial outer membrane biogenesis; enterobacterial common antigen biosynthesis. In terms of biological role, probably involved in the polymerization of enterobacterial common antigen (ECA) trisaccharide repeat units. The chain is Probable ECA polymerase from Shigella sonnei (strain Ss046).